A 334-amino-acid chain; its full sequence is HTH-type transcriptional repressor PurR (334 aa).

In terms of domain architecture, HTH lacI-type spans Ala-2–Cys-56. A DNA-binding region (H-T-H motif) is located at residues Ile-4 to Asn-23. Residues Ser-48–Cys-56 mediate DNA binding. Hypoxanthine is bound by residues Phe-73, Lys-189, Thr-191, Phe-220, and Asp-274.

In terms of assembly, homodimer.

It participates in purine metabolism; purine nucleotide biosynthesis [regulation]. Is the main repressor of the genes involved in the de novo synthesis of purine nucleotides, regulating purB, purC, purEK, purF, purHD, purL, purMN and guaBA expression. PurR is allosterically activated to bind its cognate DNA by binding the purine corepressors, hypoxanthine or guanine, thereby effecting transcription repression. The protein is HTH-type transcriptional repressor PurR of Photobacterium profundum (strain SS9).